Consider the following 20-residue polypeptide: AVPDKIDPRESGYVTGVKDQ.

The span at 1–10 shows a compositional bias: basic and acidic residues; the sequence is AVPDKIDPRE. The disordered stretch occupies residues 1 to 20; it reads AVPDKIDPRESGYVTGVKDQ.

The protein belongs to the peptidase C1 family. In terms of assembly, dimer of a heavy and a light chain linked by disulfide bonds.

It localises to the lysosome. The enzyme catalyses Specificity close to that of papain. As compared to cathepsin B, cathepsin L exhibits higher activity toward protein substrates, but has little activity on Z-Arg-Arg-NHMec, and no peptidyl-dipeptidase activity.. Functionally, thiol protease that assists the parasite in burrowing through the gut wall and liver of its mammalian host. This Fasciola hepatica (Liver fluke) protein is Cathepsin L1.